Consider the following 121-residue polypeptide: Large ribosomal subunit protein uL18 (121 aa).

This sequence belongs to the universal ribosomal protein uL18 family. As to quaternary structure, part of the 50S ribosomal subunit; part of the 5S rRNA/L5/L18/L25 subcomplex. Contacts the 5S and 23S rRNAs.

In terms of biological role, this is one of the proteins that bind and probably mediate the attachment of the 5S RNA into the large ribosomal subunit, where it forms part of the central protuberance. This Geobacter metallireducens (strain ATCC 53774 / DSM 7210 / GS-15) protein is Large ribosomal subunit protein uL18.